The chain runs to 112 residues: T cell receptor alpha variable 7 (112 aa).

The signal sequence occupies residues 1–21 (MEKMRRPVLIIFCLCLGWANG). An Ig-like domain is found at 22–112 (ENQVEHSPHF…DSATYFCAVD (91 aa)). C44 and C109 are joined by a disulfide. N84 and N90 each carry an N-linked (GlcNAc...) asparagine glycan.

Alpha-beta TR is a heterodimer composed of an alpha and beta chain; disulfide-linked. The alpha-beta TR is associated with the transmembrane signaling CD3 coreceptor proteins to form the TR-CD3 (TcR or TCR). The assembly of alpha-beta TR heterodimers with CD3 occurs in the endoplasmic reticulum where a single alpha-beta TR heterodimer associates with one CD3D-CD3E heterodimer, one CD3G-CD3E heterodimer and one CD247 homodimer forming a stable octameric structure. CD3D-CD3E and CD3G-CD3E heterodimers preferentially associate with TR alpha and TR beta chains, respectively. The association of the CD247 homodimer is the last step of TcR assembly in the endoplasmic reticulum and is required for transport to the cell surface.

It localises to the cell membrane. Functionally, v region of the variable domain of T cell receptor (TR) alpha chain that participates in the antigen recognition. Alpha-beta T cell receptors are antigen specific receptors which are essential to the immune response and are present on the cell surface of T lymphocytes. Recognize peptide-major histocompatibility (MH) (pMH) complexes that are displayed by antigen presenting cells (APC), a prerequisite for efficient T cell adaptive immunity against pathogens. Binding of alpha-beta TR to pMH complex initiates TR-CD3 clustering on the cell surface and intracellular activation of LCK that phosphorylates the ITAM motifs of CD3G, CD3D, CD3E and CD247 enabling the recruitment of ZAP70. In turn ZAP70 phosphorylates LAT, which recruits numerous signaling molecules to form the LAT signalosome. The LAT signalosome propagates signal branching to three major signaling pathways, the calcium, the mitogen-activated protein kinase (MAPK) kinase and the nuclear factor NF-kappa-B (NF-kB) pathways, leading to the mobilization of transcription factors that are critical for gene expression and essential for T cell growth and differentiation. The T cell repertoire is generated in the thymus, by V-(D)-J rearrangement. This repertoire is then shaped by intrathymic selection events to generate a peripheral T cell pool of self-MH restricted, non-autoaggressive T cells. Post-thymic interaction of alpha-beta TR with the pMH complexes shapes TR structural and functional avidity. This is T cell receptor alpha variable 7 from Homo sapiens (Human).